The chain runs to 492 residues: Serine/threonine protein phosphatase 2A 57 kDa regulatory subunit B' theta isoform (492 aa).

The segment at 1 to 63 is disordered; it reads MWKQILSKLP…GFKEGNLKGN (63 aa). Residues 16–39 show a composition bias toward low complexity; that stretch reads KNHSSSSSSTSKSSDNGASKSGNS. The Microbody targeting signal signature appears at 490–492; that stretch reads SSL.

It belongs to the phosphatase 2A regulatory subunit B56 family. As to quaternary structure, PP2A consists of a common heteromeric enzyme, composed of a catalytic subunit (subunits C), a constant regulatory subunit (subunit A), and a variety of regulatory subunits such as subunits B (the R2/B/PR55/B55, R3/B''/PR72/PR130/PR59 and R5/B'/B56 families). Interacts with BZR1. Interacts with PP2A2, PP2A5 and PP2AA2. In terms of tissue distribution, highly expressed in dry seeds. Expressed in roots, cotyledons, rosette leaves and flowers.

It localises to the cytoplasm. Its subcellular location is the cytosol. The protein resides in the peroxisome. Its function is as follows. The B regulatory subunit may modulate substrate selectivity and catalytic activity, and may also direct the localization of the catalytic enzyme to a particular subcellular compartment. Associates with the serine/threonine-protein phosphatase PP2A catalytic subunit C and regulatory subunit A to positively regulates beta-oxidation of fatty acids and protoauxins in peroxisomes by dephosphorylating peroxisomal beta-oxidation-related proteins. Required for the formation of the PP2A holoenzyme that negatively regulates brassinosteroid signaling by dephosphorylating and inactivating BRI1 in the cytoplasm. The sequence is that of Serine/threonine protein phosphatase 2A 57 kDa regulatory subunit B' theta isoform (B'THETA) from Arabidopsis thaliana (Mouse-ear cress).